The chain runs to 252 residues: Phosphatidylserine decarboxylase proenzyme (252 aa).

Catalysis depends on Ser211, which acts as the Schiff-base intermediate with substrate; via pyruvic acid. The residue at position 211 (Ser211) is a Pyruvic acid (Ser); by autocatalysis.

This sequence belongs to the phosphatidylserine decarboxylase family. PSD-A subfamily. Heterodimer of a large membrane-associated beta subunit and a small pyruvoyl-containing alpha subunit. Pyruvate is required as a cofactor. In terms of processing, is synthesized initially as an inactive proenzyme. Formation of the active enzyme involves a self-maturation process in which the active site pyruvoyl group is generated from an internal serine residue via an autocatalytic post-translational modification. Two non-identical subunits are generated from the proenzyme in this reaction, and the pyruvate is formed at the N-terminus of the alpha chain, which is derived from the carboxyl end of the proenzyme. The post-translation cleavage follows an unusual pathway, termed non-hydrolytic serinolysis, in which the side chain hydroxyl group of the serine supplies its oxygen atom to form the C-terminus of the beta chain, while the remainder of the serine residue undergoes an oxidative deamination to produce ammonia and the pyruvoyl prosthetic group on the alpha chain.

It localises to the cell membrane. The catalysed reaction is a 1,2-diacyl-sn-glycero-3-phospho-L-serine + H(+) = a 1,2-diacyl-sn-glycero-3-phosphoethanolamine + CO2. It participates in phospholipid metabolism; phosphatidylethanolamine biosynthesis; phosphatidylethanolamine from CDP-diacylglycerol: step 2/2. Functionally, catalyzes the formation of phosphatidylethanolamine (PtdEtn) from phosphatidylserine (PtdSer). This is Phosphatidylserine decarboxylase proenzyme from Novosphingobium aromaticivorans (strain ATCC 700278 / DSM 12444 / CCUG 56034 / CIP 105152 / NBRC 16084 / F199).